Reading from the N-terminus, the 179-residue chain is ADP-ribosylation factor-like protein 5A (179 aa).

G2 carries N-myristoyl glycine lipidation. GTP is bound by residues 23–30 (GLDNAGKT), 66–70 (DIGGQ), 125–128 (NKQD), and A159.

This sequence belongs to the small GTPase superfamily. Arf family.

In terms of biological role, lacks ADP-ribosylation enhancing activity. In Homo sapiens (Human), this protein is ADP-ribosylation factor-like protein 5A (ARL5A).